Here is a 182-residue protein sequence, read N- to C-terminus: Large ribosomal subunit protein uL5 (182 aa).

Belongs to the universal ribosomal protein uL5 family. Part of the 50S ribosomal subunit; part of the 5S rRNA/L5/L18/L25 subcomplex. Contacts the 5S rRNA and the P site tRNA. Forms a bridge to the 30S subunit in the 70S ribosome.

In terms of biological role, this is one of the proteins that bind and probably mediate the attachment of the 5S RNA into the large ribosomal subunit, where it forms part of the central protuberance. In the 70S ribosome it contacts protein S13 of the 30S subunit (bridge B1b), connecting the 2 subunits; this bridge is implicated in subunit movement. Contacts the P site tRNA; the 5S rRNA and some of its associated proteins might help stabilize positioning of ribosome-bound tRNAs. The polypeptide is Large ribosomal subunit protein uL5 (Thermosipho melanesiensis (strain DSM 12029 / CIP 104789 / BI429)).